The sequence spans 357 residues: MEIIEIDGSMGEGGGQILRYSLGFSAVTLKPVRIYNIRAKRSNPGLRPQHLTAVKALQMITDAVVKGAKVGSMEIYFEPKRRKPGNYRFNIGTAGSTTLVIQAILPALLFSKGYSSVEIIGGTDVPWSPPIDYMRYVFIYNLRFFGVDVEIELYRRGHYPRGGGRVVLKVKPLLGKMKPINIVERGKLISIYGISHAVRLPRHVAERQARSAATVIREKLGVEPNILIESYPPGRDPHLGPGSGIVLYADVEAGTRLGGDALGARGKRAEIVGREAAEKLIDELSSGMAFDSHMGDMLIPYMFLAGGESIAGVSKLTNHTLTAIEVSKIFLPNSKVSIVGNKGEKGIIRIHGVGLSP.

ATP-binding positions include Gln-102 and 293–296; that span reads HMGD. His-319 (tele-AMP-histidine intermediate) is an active-site residue.

It belongs to the RNA 3'-terminal cyclase family. Type 1 subfamily.

It localises to the cytoplasm. It carries out the reaction a 3'-end 3'-phospho-ribonucleotide-RNA + ATP = a 3'-end 2',3'-cyclophospho-ribonucleotide-RNA + AMP + diphosphate. Its function is as follows. Catalyzes the conversion of 3'-phosphate to a 2',3'-cyclic phosphodiester at the end of RNA. The mechanism of action of the enzyme occurs in 3 steps: (A) adenylation of the enzyme by ATP; (B) transfer of adenylate to an RNA-N3'P to produce RNA-N3'PP5'A; (C) and attack of the adjacent 2'-hydroxyl on the 3'-phosphorus in the diester linkage to produce the cyclic end product. The biological role of this enzyme is unknown but it is likely to function in some aspects of cellular RNA processing. The protein is RNA 3'-terminal phosphate cyclase of Staphylothermus marinus (strain ATCC 43588 / DSM 3639 / JCM 9404 / F1).